The following is a 533-amino-acid chain: Inositol-3-phosphate synthase (533 aa).

Position 48 is a phosphothreonine (threonine 48). Residues glycine 74, glycine 75, asparagine 76, asparagine 77, and aspartate 148 each contribute to the NAD(+) site. Residues serine 177 and serine 184 each carry the phosphoserine modification. The NAD(+) site is built by serine 184, isoleucine 185, glutamine 195, aspartate 196, arginine 198, threonine 244, alanine 245, asparagine 246, threonine 247, glycine 295, serine 296, aspartate 320, leucine 321, serine 323, asparagine 354, asparagine 355, and aspartate 356. Serine 296 carries the phosphoserine modification. Serine 368 bears the Phosphoserine mark. Lysine 369 is a binding site for NAD(+). Serine 374 is modified (phosphoserine). Glycine 409, aspartate 410, aspartate 438, and serine 439 together coordinate NAD(+).

This sequence belongs to the myo-inositol 1-phosphate synthase family. In terms of assembly, homotetramer. NAD(+) is required as a cofactor. Phosphorylation at Ser-184 and Ser-374 is associated with a decrease in activity. Increasingly phosphorylated in presence of valproate.

The protein resides in the cytoplasm. The enzyme catalyses D-glucose 6-phosphate = 1D-myo-inositol 3-phosphate. The protein operates within polyol metabolism; myo-inositol biosynthesis; myo-inositol from D-glucose 6-phosphate: step 1/2. Competitively inhibited by myo-2-inosose 1-phosphate, which is also an intermediate in the catalytic reaction. Competitively inhibited by 2-deoxy-myo-inositol 1-phosphate (dMIP), 1-deoxy-1-(phosphonomethyl)-myo-2-inosose (DPMI), dihydroxyacetone phosphate (DHAP), 6-deoxy-D-glucose 6-(E)-vinylhomophosphonate, 6-deoxy-D-glucitol 6-(E)-vinylhomophosphonate, 2,6-dideoxy-D-glucose 6-(E)-vinylhomophosphonate and 2,6-dideoxy-D-glucitol 6-(E)-vinylhomophosphonate. Inhibited by 2-deoxyglucitol 6-phosphate (dgtolP). Its function is as follows. Key enzyme in myo-inositol biosynthesis pathway that catalyzes the conversion of glucose 6-phosphate to 1-myo-inositol 1-phosphate in a NAD-dependent manner. Rate-limiting enzyme in the synthesis of all inositol-containing compounds. This chain is Inositol-3-phosphate synthase (INO1), found in Saccharomyces cerevisiae (strain ATCC 204508 / S288c) (Baker's yeast).